We begin with the raw amino-acid sequence, 115 residues long: Large ribosomal subunit protein bL19 (115 aa).

This sequence belongs to the bacterial ribosomal protein bL19 family.

In terms of biological role, this protein is located at the 30S-50S ribosomal subunit interface and may play a role in the structure and function of the aminoacyl-tRNA binding site. In Bacillus velezensis (strain DSM 23117 / BGSC 10A6 / LMG 26770 / FZB42) (Bacillus amyloliquefaciens subsp. plantarum), this protein is Large ribosomal subunit protein bL19.